A 224-amino-acid chain; its full sequence is MSIKEWPEDERPREKLLRQGPGGLSDAELLAIFLRTGVSGLSAVDLSRHLLQQFGSLRALLGAEQRAFCAAHGLGPAKYAQLQAVLEMGKRHLAEQLQRGDPLTSPQLTRDYLQAQLRDRPREVFALLLLDNQHRVIQFVELFYGTLDSASVWPREIVQIALKHNAAAVILAHNHPSGVAEPSRADRQITDRITAALALIDIRVLDHLVIGDGITVSFAERGWL.

Residues Pro102–Leu224 form the MPN domain. The Zn(2+) site is built by His173, His175, and Asp186. Positions His173 to Asp186 match the JAMM motif motif.

Belongs to the UPF0758 family.

The polypeptide is UPF0758 protein AHA_0160 (Aeromonas hydrophila subsp. hydrophila (strain ATCC 7966 / DSM 30187 / BCRC 13018 / CCUG 14551 / JCM 1027 / KCTC 2358 / NCIMB 9240 / NCTC 8049)).